A 673-amino-acid polypeptide reads, in one-letter code: ATP-binding cassette sub-family G member 8 (673 aa).

Residues 1–11 (MAGKAAEERGL) are compositionally biased toward basic and acidic residues. The interval 1–25 (MAGKAAEERGLPKGATPQDTSGLQD) is disordered. The Cytoplasmic portion of the chain corresponds to 1-416 (MAGKAAEERG…ISNDFRDLPT (416 aa)). The region spanning 47 to 313 (LEVRDLNYQV…FTAIGYPCPR (267 aa)) is the ABC transporter domain. Residues 411-665 (FRDLPTLLIH…VLYYVSLRFI (255 aa)) form the ABC transmembrane type-2 domain. The chain crosses the membrane as a helical span at residues 417–437 (LLIHGAEACLMSMTIGFLYFG). Topologically, residues 438–447 (HGSIQLSFMD) are extracellular. Residues 448–468 (TAALLFMIGALIPFNVILDVI) traverse the membrane as a helical segment. At 469 to 497 (SKCYSERAMLYYELEDGLYTTGPYFFAKI) the chain is on the cytoplasmic side. A helical transmembrane segment spans residues 498 to 518 (LGELPEHCAYIIIYGMPTYWL). Residues 519–527 (ANLRPGLQP) lie on the Extracellular side of the membrane. The helical transmembrane segment at 528 to 548 (FLLHFLLVWLVVFCCRIMALA) threads the bilayer. Over 549 to 555 (AAALLPT) the chain is Cytoplasmic. Residues 556–576 (FHMASFFSNALYNSFYLAGGF) traverse the membrane as a helical segment. The Extracellular segment spans residues 577–639 (MINLSSLWTV…LSVMELDSYP (63 aa)). An N-linked (GlcNAc...) asparagine glycan is attached at Asn-619. Residues 640–660 (LYAIYLIVIGLSGGFMVLYYV) traverse the membrane as a helical segment. At 661 to 673 (SLRFIKQKPSQDW) the chain is on the cytoplasmic side.

The protein belongs to the ABC transporter superfamily. ABCG family. Eye pigment precursor importer (TC 3.A.1.204) subfamily. Heterodimer with ABCG8. Requires Mg(2+) as cofactor. Post-translationally, N-glycosylated. In terms of tissue distribution, predominantly expressed in the liver. Low expression levels in the small intestine and colon. Very low levels in other tissues, including brain, heart and spleen.

The protein resides in the cell membrane. It is found in the apical cell membrane. It catalyses the reaction cholesterol(in) + ATP + H2O = cholesterol(out) + ADP + phosphate + H(+). It carries out the reaction sitosterol(in) + ATP + H2O = sitosterol(out) + ADP + phosphate + H(+). With respect to regulation, the ATPase activity of the heterodimer is stimulated by cholate. Taurocholate, glycocholate, taurochenodeoxycholate, glycochenodeoxycholate and taurodeoxycholate also stimulate ATPase activity, but to a lower degree. Glycodeoxycholate has no significant effect on ATPase activity. ATPase activity is inhibited by vanadate and by berillium fluoride. ABCG5 and ABCG8 form an obligate heterodimer that mediates Mg(2+)- and ATP-dependent sterol transport across the cell membrane. Plays an essential role in the selective transport of the dietary cholesterol in and out of the enterocytes and in the selective sterol excretion by the liver into bile. Required for normal sterol homeostasis. The heterodimer with ABCG5 has ATPase activity. The protein is ATP-binding cassette sub-family G member 8 of Homo sapiens (Human).